The sequence spans 157 residues: 3-dehydroquinate dehydratase (157 aa).

Y24 acts as the Proton acceptor in catalysis. N75, H81, and D88 together coordinate substrate. The Proton donor role is filled by H101. Substrate is bound by residues 102–103 (LS) and R112.

This sequence belongs to the type-II 3-dehydroquinase family. Homododecamer.

It catalyses the reaction 3-dehydroquinate = 3-dehydroshikimate + H2O. The protein operates within metabolic intermediate biosynthesis; chorismate biosynthesis; chorismate from D-erythrose 4-phosphate and phosphoenolpyruvate: step 3/7. Functionally, catalyzes a trans-dehydration via an enolate intermediate. The sequence is that of 3-dehydroquinate dehydratase from Brucella melitensis biotype 1 (strain ATCC 23456 / CCUG 17765 / NCTC 10094 / 16M).